Consider the following 161-residue polypeptide: 18.3 kDa class I heat shock protein (161 aa).

The 114-residue stretch at 48–161 (ETAAFANARI…KPQVKAINVY (114 aa)) folds into the sHSP domain.

It belongs to the small heat shock protein (HSP20) family. In terms of assembly, forms oligomeric structures.

It localises to the cytoplasm. This is 18.3 kDa class I heat shock protein (HSP18) from Oxybasis rubra (Red goosefoot).